The following is a 150-amino-acid chain: Globin-1 (150 aa).

The Globin domain occupies 11–150 (PLSDAEKNKI…MICILLSSAY (140 aa)). Histidine 74 and histidine 106 together coordinate heme b.

The protein belongs to the globin family. Monomer.

This chain is Globin-1, found in Mordacia mordax (Southern hemisphere lamprey).